Here is a 310-residue protein sequence, read N- to C-terminus: Methionyl-tRNA formyltransferase (310 aa).

(6S)-5,6,7,8-tetrahydrofolate is bound at residue 110–113; sequence SLLP.

Belongs to the Fmt family.

It catalyses the reaction L-methionyl-tRNA(fMet) + (6R)-10-formyltetrahydrofolate = N-formyl-L-methionyl-tRNA(fMet) + (6S)-5,6,7,8-tetrahydrofolate + H(+). Functionally, attaches a formyl group to the free amino group of methionyl-tRNA(fMet). The formyl group appears to play a dual role in the initiator identity of N-formylmethionyl-tRNA by promoting its recognition by IF2 and preventing the misappropriation of this tRNA by the elongation apparatus. The protein is Methionyl-tRNA formyltransferase of Streptomyces avermitilis (strain ATCC 31267 / DSM 46492 / JCM 5070 / NBRC 14893 / NCIMB 12804 / NRRL 8165 / MA-4680).